The sequence spans 615 residues: 1-deoxy-D-xylulose-5-phosphate synthase (615 aa).

Thiamine diphosphate is bound by residues His-72 and 111 to 113; that span reads GHS. Asp-142 is a Mg(2+) binding site. Thiamine diphosphate is bound by residues 143 to 144, Asn-171, Tyr-278, and Glu-360; that span reads GA. Mg(2+) is bound at residue Asn-171.

Belongs to the transketolase family. DXPS subfamily. As to quaternary structure, homodimer. The cofactor is Mg(2+). It depends on thiamine diphosphate as a cofactor.

The enzyme catalyses D-glyceraldehyde 3-phosphate + pyruvate + H(+) = 1-deoxy-D-xylulose 5-phosphate + CO2. It participates in metabolic intermediate biosynthesis; 1-deoxy-D-xylulose 5-phosphate biosynthesis; 1-deoxy-D-xylulose 5-phosphate from D-glyceraldehyde 3-phosphate and pyruvate: step 1/1. Catalyzes the acyloin condensation reaction between C atoms 2 and 3 of pyruvate and glyceraldehyde 3-phosphate to yield 1-deoxy-D-xylulose-5-phosphate (DXP). The chain is 1-deoxy-D-xylulose-5-phosphate synthase from Campylobacter jejuni subsp. jejuni serotype O:2 (strain ATCC 700819 / NCTC 11168).